We begin with the raw amino-acid sequence, 136 residues long: Large ribosomal subunit protein uL16 (136 aa).

Belongs to the universal ribosomal protein uL16 family. As to quaternary structure, part of the 50S ribosomal subunit.

Binds 23S rRNA and is also seen to make contacts with the A and possibly P site tRNAs. The protein is Large ribosomal subunit protein uL16 of Mesomycoplasma hyopneumoniae (strain 232) (Mycoplasma hyopneumoniae).